The primary structure comprises 171 residues: Ribosome maturation factor RimP (171 aa).

The protein belongs to the RimP family.

The protein resides in the cytoplasm. Functionally, required for maturation of 30S ribosomal subunits. The polypeptide is Ribosome maturation factor RimP (Oleidesulfovibrio alaskensis (strain ATCC BAA-1058 / DSM 17464 / G20) (Desulfovibrio alaskensis)).